The sequence spans 808 residues: ATP-dependent 6-phosphofructokinase (808 aa).

A disordered region spans residues 1 to 21; the sequence is MSSTQAPVEPPKRRRIGVLTS. Residues 1 to 389 form an N-terminal catalytic PFK domain 1 region; it reads MSSTQAPVEP…YHFAYRNTAT (389 aa). ATP-binding positions include Gly-23, 86–87, and 116–119; these read RS and GDGS. Asp-117 lines the Mg(2+) pocket. Substrate-binding positions include 162-164, Arg-199, 206-208, Glu-263, Arg-291, and 297-300; these read SID, MGR, and HTQR. Asp-164 functions as the Proton acceptor in the catalytic mechanism. Residues 390-403 are interdomain linker; the sequence is PDHPKMILPQDKRM. Positions 404-808 are C-terminal regulatory PFK domain 2; the sequence is RIAIIHVGAP…DIDPSALTSS (405 aa). Beta-D-fructose 2,6-bisphosphate-binding positions include Arg-480, 537 to 541, Arg-575, 582 to 584, Glu-642, Arg-668, 674 to 677, and Arg-749; these read TISNN, QGG, and HFQQ.

Belongs to the phosphofructokinase type A (PFKA) family. ATP-dependent PFK group I subfamily. Eukaryotic two domain clade 'E' sub-subfamily. As to quaternary structure, homotetramer. Mg(2+) is required as a cofactor.

The protein localises to the cytoplasm. The catalysed reaction is beta-D-fructose 6-phosphate + ATP = beta-D-fructose 1,6-bisphosphate + ADP + H(+). It functions in the pathway carbohydrate degradation; glycolysis; D-glyceraldehyde 3-phosphate and glycerone phosphate from D-glucose: step 3/4. Allosterically activated by ADP, AMP, or fructose 2,6-bisphosphate, and allosterically inhibited by ATP or citrate. In terms of biological role, catalyzes the phosphorylation of D-fructose 6-phosphate to fructose 1,6-bisphosphate by ATP, the first committing step of glycolysis. The protein is ATP-dependent 6-phosphofructokinase (pfkA) of Aspergillus fumigatus (strain ATCC MYA-4609 / CBS 101355 / FGSC A1100 / Af293) (Neosartorya fumigata).